The following is a 344-amino-acid chain: Mitochondrial substrate carrier family protein D (344 aa).

Residues 1–22 are Mitochondrial intermembrane-facing; sequence MDSTKTNNKWAAAGILNSVGKD. Solcar repeat units follow at residues 17–104, 119–212, and 239–327; these read NSVG…CQSY, IPYH…MKRK, and VPAW…TRNL. The helical transmembrane segment at 23–43 threads the bilayer; that stretch reads FVAGSVGGMSSIMAGHPFDTI. At 44-75 the chain is on the mitochondrial matrix side; that stretch reads KVMLQDASGNLPKFKNGFQALKYIMKVDGIKG. The helical transmembrane segment at 76-96 threads the bilayer; the sequence is IYRGLSVPLFSVSFTNSVFFA. At 97 to 116 the chain is on the mitochondrial intermembrane side; sequence TNNFCQSYFHPPCKDENGED. Residues 117-137 traverse the membrane as a helical segment; it reads ILIPYHKAAAAGAIAGGVISL. Over 138 to 186 the chain is Mitochondrial matrix; that stretch reads LITPRDLVKSKLQVQCRPFGSTNVSLQYKGPIDVIRQTIKRDGIKGMFK. Residues 187–207 traverse the membrane as a helical segment; it reads GIRSTFCRDIPGDAVYFVVYE. Topologically, residues 208-238 are mitochondrial intermembrane; it reads FMKRKLLALSKNNNNNNNNNDNNDNSSPKAG. Residues 239–259 traverse the membrane as a helical segment; sequence VPAWVAIGAGGCAGMSFWMSI. The Mitochondrial matrix portion of the chain corresponds to 260 to 301; sequence YPMDVVKTRIQTQPDHLPPQYTSVLQTITKIYREEGISVFFR. Residues 302-321 form a helical membrane-spanning segment; the sequence is GFSATILRAFPTSAVNFLMY. Residues 322–344 lie on the Mitochondrial intermembrane side of the membrane; it reads ETTRNLLNSKDPFYNNNDHYNAE.

It belongs to the mitochondrial carrier (TC 2.A.29) family.

The protein localises to the mitochondrion inner membrane. In terms of biological role, calcium-dependent mitochondrial solute carrier. Mitochondrial solute carriers shuttle metabolites, nucleotides, and cofactors through the mitochondrial inner membrane. This is Mitochondrial substrate carrier family protein D (mcfD) from Dictyostelium discoideum (Social amoeba).